We begin with the raw amino-acid sequence, 391 residues long: D-xylose 1-dehydrogenase (NADP(+)) (391 aa).

The protein belongs to the Gfo/Idh/MocA family.

It catalyses the reaction D-xylose + NADP(+) = D-xylono-1,5-lactone + NADPH + H(+). Functionally, NADP-dependent D-xylose dehydrogenase catalyzing the oxydation of D-xylose into D-xylonolactone. Also displays some, albeit lower activity with D-glucose, D-galactose and L-arabinose as substrate. Probably not involved in D-xylose degradation, as it has been shown that H.jecorina assimilates D-xylose via D-xylose reductase and xylitol dehydrogenase, and it is unable to grow on D-xylonic acid as sole carbon source. May play a role in the regeneration of NADP(+) in the presence of D-xylose. The chain is D-xylose 1-dehydrogenase (NADP(+)) from Hypocrea jecorina (strain ATCC 56765 / BCRC 32924 / NRRL 11460 / Rut C-30) (Trichoderma reesei).